Here is a 274-residue protein sequence, read N- to C-terminus: Pyrroline-5-carboxylate reductase 3 (274 aa).

This sequence belongs to the pyrroline-5-carboxylate reductase family. In terms of assembly, homodecamer; composed of 5 homodimers.

It is found in the cytoplasm. It carries out the reaction L-proline + NADP(+) = (S)-1-pyrroline-5-carboxylate + NADPH + 2 H(+). The enzyme catalyses L-proline + NAD(+) = (S)-1-pyrroline-5-carboxylate + NADH + 2 H(+). It functions in the pathway amino-acid biosynthesis; L-proline biosynthesis; L-proline from L-glutamate 5-semialdehyde: step 1/1. Its function is as follows. Oxidoreductase that catalyzes the last step in proline biosynthesis, which corresponds to the reduction of pyrroline-5-carboxylate (P5C) to L-proline using NAD(P)H. Proline is synthesized from either glutamate or ornithine; both are converted to P5C, and then to proline via pyrroline-5-carboxylate reductases (PYCRs). PYCR3 is exclusively linked to the biosynthesis of proline from ornithine. This is Pyrroline-5-carboxylate reductase 3 from Xenopus laevis (African clawed frog).